The sequence spans 189 residues: Xanthine phosphoribosyltransferase (189 aa).

Leu-20 and Asn-27 together coordinate xanthine. 128–132 (ANGKA) lines the 5-phospho-alpha-D-ribose 1-diphosphate pocket. Lys-156 is a xanthine binding site.

Belongs to the purine/pyrimidine phosphoribosyltransferase family. Xpt subfamily. Homodimer.

Its subcellular location is the cytoplasm. The catalysed reaction is XMP + diphosphate = xanthine + 5-phospho-alpha-D-ribose 1-diphosphate. The protein operates within purine metabolism; XMP biosynthesis via salvage pathway; XMP from xanthine: step 1/1. Converts the preformed base xanthine, a product of nucleic acid breakdown, to xanthosine 5'-monophosphate (XMP), so it can be reused for RNA or DNA synthesis. This chain is Xanthine phosphoribosyltransferase, found in Pseudomonas syringae pv. syringae (strain B728a).